The sequence spans 338 residues: Protein RecA (338 aa).

Residue 68–75 coordinates ATP; sequence GPESSGKT.

It belongs to the RecA family.

The protein localises to the cytoplasm. In terms of biological role, can catalyze the hydrolysis of ATP in the presence of single-stranded DNA, the ATP-dependent uptake of single-stranded DNA by duplex DNA, and the ATP-dependent hybridization of homologous single-stranded DNAs. It interacts with LexA causing its activation and leading to its autocatalytic cleavage. This is Protein RecA from Citrifermentans bemidjiense (strain ATCC BAA-1014 / DSM 16622 / JCM 12645 / Bem) (Geobacter bemidjiensis).